The following is a 782-amino-acid chain: Anoctamin-9 (782 aa).

The Cytoplasmic segment spans residues 1 to 198; that stretch reads MQGEESLRIL…LYFVWLGWYT (198 aa). The helical transmembrane segment at 199-219 threads the bilayer; sequence YMLVPAALTGLLVFLSGFSLF. The Extracellular segment spans residues 220-264; sequence EASQISKEICEAHDILMCPLGDHSRRYQRLSETCTFAKLTHLFDN. Phosphoserine; by PKA is present on S250. Residues 265-285 form a helical membrane-spanning segment; that stretch reads DGTVVFAIFMALWATVFLEIW. The Cytoplasmic portion of the chain corresponds to 286–331; the sequence is KRQRARVVLHWDLYVWDEEQEEMALQLINCPDYKLRPYQHSYLRST. Residues 332-352 traverse the membrane as a helical segment; sequence VILVLTLLMICLMIGMAHVLV. Topologically, residues 353–373 are extracellular; that stretch reads VYRVLASALFSSSAVPFLEEQ. The helical transmembrane segment at 374–394 threads the bilayer; that stretch reads VTTAVVVTGALVHYVTIIIMT. Residues 395 to 423 lie on the Cytoplasmic side of the membrane; sequence KINRCVALKLCDFEMPRTFSERESRFTIR. A helical transmembrane segment spans residues 424-444; it reads FFTLQFFTHFSSLIYIAFILG. Residues 445-552 are Extracellular-facing; it reads RINGHPGKST…EMMIQYGFTT (108 aa). The helical transmembrane segment at 553–573 threads the bilayer; sequence IFVAAFPLAPLLALFSNLVEI. At 574-604 the chain is on the cytoplasmic side; sequence RLDAIKMVWLQRRLVPRKAKDIGTWLQVLET. The chain crosses the membrane as a helical span at residues 605 to 625; that stretch reads IGVLAVIANGMVIAFTSEFIP. Residues 626-703 are Extracellular-facing; it reads RVVYKYRYSP…QFWFLLAIRL (78 aa). Residues N641, N652, N674, and N690 are each glycosylated (N-linked (GlcNAc...) asparagine). A helical transmembrane segment spans residues 704–724; the sequence is AFVILFEHVALCIKLIAAWFV. At 725-782 the chain is on the cytoplasmic side; the sequence is PDIPQSVKNKVLEVKYQRLREKMWHGRQRLGGVGAGSRPPMPAHPTPASIFSARSTDV. The interval 756-782 is disordered; sequence GVGAGSRPPMPAHPTPASIFSARSTDV.

This sequence belongs to the anoctamin family. Post-translationally, phosphorylated on serine residues by cAMP-dependent protein kinase A (PKA) which is essential for activation of its cation channel activity. As to expression, expressed in the kidney. Expressed in the olfactory epithelium.

It localises to the cell membrane. The protein localises to the endoplasmic reticulum. The enzyme catalyses a 1,2-diacyl-sn-glycero-3-phospho-L-serine(in) = a 1,2-diacyl-sn-glycero-3-phospho-L-serine(out). The catalysed reaction is a beta-D-galactosyl-(1&lt;-&gt;1')-N-acylsphing-4-enine(out) = a beta-D-galactosyl-(1&lt;-&gt;1')-N-acylsphing-4-enine(in). It carries out the reaction a 1,2-diacyl-sn-glycero-3-phosphocholine(in) = a 1,2-diacyl-sn-glycero-3-phosphocholine(out). It catalyses the reaction Ca(2+)(in) = Ca(2+)(out). The enzyme catalyses Na(+)(in) = Na(+)(out). The catalysed reaction is K(+)(in) = K(+)(out). Cation channel activity is activated via phosphorylation on serine residues by cAMP-dependent protein kinase A (PKA). Its function is as follows. PKA-activated nonselective cation channel. Discriminates poorly among cations but is more permeable to Ca(2+) ions than to monovalent cations. Acts as a calcium-activated calcium permeable channel which may operate as a endoplasmic reticulum (ER) Ca(2+)-leak channel, reducing the loading of the ER Ca(2+) store. Regulates intracellular Ca2+ signals, ion channel activity, and cytokine release in the renal tissue. Plays an important role in olfaction, amplifying cAMP-evoked cyclic nucleotide-gated (CNG) channel currents in the olfactory sensory neurons. Has calcium-dependent phospholipid scramblase activity; scrambles phosphatidylserine, phosphatidylcholine and galactosylceramide. Does not exhibit calcium-activated chloride channel (CaCC) activity. Can inhibit the activity of ANO1. This is Anoctamin-9 (ANO9) from Homo sapiens (Human).